The chain runs to 732 residues: MIRSEKEFDYIKIKLASPMRILQWSHRKLPNGQFVGEVQKSETINYRTFKPEMDGLFCERIFGPSKSLECACGKYKRVRYEGLICERCGVELTESRVRRHRMGHINLIYPVTHVWYTNSRPNYIALLLEVEQCEKRLDTGWTEFADLRDIKEKDNKDIPEYPSSEIECRNYLASPKAILNCKEFLKEKSKAKKSNIVNFYDERIKRIKLASLAYFIAEDEIAFYGLHWDLQQYRRCRELGFTGYPLKPHSKSRNRRRNTPKYLLRSTPNYLIGAVLIKRELEKLNLDQEIIKTRNFIMLCSKVLHKEQPFYNFSHWSRKWEYQRIYKLRDQSIKRIRILENLLTTGANPAWMIITILPVIPPALRPMIQLEGGRFATSDLNELYRRIITRNNRLLRLLEIDAPQLIIRNEKRMLQEAVDTLIDNGKRGKIALSASNRPLKSLSDIIKGKHGRFRQNLLGKRVDYSGRSVIVVGPSLKLNQCGLPYEMAIELFQPFIIRELINQGLASNMKVAKNLLQQNEPIINPVLEKVLANHPIFLNRAPTLHRLGIQAFQPIIVQGRAIKLHPLVCSAFNADFDGDQMAVHVPLSLEAQAECYMLMLAPYNFLSPANGEPIIMPSQDMVLGCYYLTVNNINGLLGSNHYFADLNDVILAYNQDQIEIHTSIWVRYKHKISKPSNFIKKIILNDKSYIEYYENIQIRKDENDQIIVQYLQTTTGRVLLNYIIQTTLNLKP.

The Zn(2+) site is built by cysteine 70, cysteine 72, cysteine 85, and cysteine 88. Residues aspartate 575, aspartate 577, and aspartate 579 each coordinate Mg(2+).

Belongs to the RNA polymerase beta' chain family. RpoC1 subfamily. In plastids the minimal PEP RNA polymerase catalytic core is composed of four subunits: alpha, beta, beta', and beta''. When a (nuclear-encoded) sigma factor is associated with the core the holoenzyme is formed, which can initiate transcription. Requires Mg(2+) as cofactor. Zn(2+) serves as cofactor.

It is found in the plastid. It localises to the chloroplast. It carries out the reaction RNA(n) + a ribonucleoside 5'-triphosphate = RNA(n+1) + diphosphate. Functionally, DNA-dependent RNA polymerase catalyzes the transcription of DNA into RNA using the four ribonucleoside triphosphates as substrates. The protein is DNA-directed RNA polymerase subunit beta' of Thalassiosira pseudonana (Marine diatom).